A 452-amino-acid chain; its full sequence is 1-aminocyclopropane-1-carboxylate synthase 3 (452 aa).

N6-(pyridoxal phosphate)lysine is present on K283.

It belongs to the class-I pyridoxal-phosphate-dependent aminotransferase family. Pyridoxal 5'-phosphate serves as cofactor. As to expression, expressed in leaves. Expressed in roots and leaf blades. Expressed at low levels in leaf sheaths and shoot bases.

The catalysed reaction is S-adenosyl-L-methionine = 1-aminocyclopropane-1-carboxylate + S-methyl-5'-thioadenosine + H(+). Its pathway is alkene biosynthesis; ethylene biosynthesis via S-adenosyl-L-methionine; ethylene from S-adenosyl-L-methionine: step 1/2. Catalyzes the formation of 1-aminocyclopropane-1-carboxylate, a direct precursor of ethylene in higher plants. The sequence is that of 1-aminocyclopropane-1-carboxylate synthase 3 from Oryza sativa subsp. japonica (Rice).